We begin with the raw amino-acid sequence, 230 residues long: MTRASLEKQPHEVASMFDGVAANYDLTNDVISLGQARLWRRAVAAAVDARPAQKILDLAAGTATSSQPFVKAGAYVVPCDFSLGMLKVGKERHPWMPFTAGDGMRLPFKDETFDTVTISFGLRNIQDTEVALRELYRVTKPGGRVVICEFSQPTWTPFRTVYTEYLMRAIPPAARAVSSNPDAYVYLAESIRDWPDQPALAALLQKAGWSKVAWRNLTGGVVALHRATRA.

S-adenosyl-L-methionine-binding positions include Thr62, Asp80, 102–103 (DG), and Ser119.

Belongs to the class I-like SAM-binding methyltransferase superfamily. MenG/UbiE family.

The catalysed reaction is a 2-demethylmenaquinol + S-adenosyl-L-methionine = a menaquinol + S-adenosyl-L-homocysteine + H(+). The protein operates within quinol/quinone metabolism; menaquinone biosynthesis; menaquinol from 1,4-dihydroxy-2-naphthoate: step 2/2. Methyltransferase required for the conversion of demethylmenaquinol (DMKH2) to menaquinol (MKH2). The chain is Demethylmenaquinone methyltransferase from Streptomyces griseus subsp. griseus (strain JCM 4626 / CBS 651.72 / NBRC 13350 / KCC S-0626 / ISP 5235).